We begin with the raw amino-acid sequence, 101 residues long: UPF0473 protein str1961 (101 aa).

This sequence belongs to the UPF0473 family.

The protein is UPF0473 protein str1961 of Streptococcus thermophilus (strain CNRZ 1066).